Reading from the N-terminus, the 326-residue chain is Inactive peptidyl-prolyl cis-trans isomerase FKBP6 (326 aa).

One can recognise a PPIase FKBP-type domain in the interval 53–142 (DASVLVKYSG…LFEIELLDFL (90 aa)). 3 TPR repeats span residues 170-203 (AATE…LHRR), 218-251 (LLVF…DRKN), and 252-285 (AKAL…QPFN).

This sequence belongs to the FKBP6 family. Interacts with HSP72/HSPA2 and CLTC. Interacts with GAPDH; leading to inhibit GAPDH catalytic activity. Interacts (via TPR repeats) with HSP90.

It localises to the cytoplasm. The protein localises to the cytosol. Its subcellular location is the nucleus. Its function is as follows. Co-chaperone required during spermatogenesis to repress transposable elements and prevent their mobilization, which is essential for the germline integrity. Acts via the piRNA metabolic process, which mediates the repression of transposable elements during meiosis by forming complexes composed of piRNAs and Piwi proteins and govern the methylation and subsequent repression of transposons. Acts as a co-chaperone via its interaction with HSP90 and is required for the piRNA amplification process, the secondary piRNA biogenesis. May be required together with HSP90 in removal of 16 nucleotide ping-pong by-products from Piwi complexes, possibly facilitating turnover of Piwi complexes. The chain is Inactive peptidyl-prolyl cis-trans isomerase FKBP6 (FKBP6) from Bos taurus (Bovine).